Reading from the N-terminus, the 1121-residue chain is Potassium channel subfamily U member 1 (1121 aa).

Residues 1–24 (MSQTLLDSLNQKELTETSCTIEIQ) are Extracellular-facing. A helical membrane pass occupies residues 25–45 (AAFILSSLATFFGGLIILFLF). Over 46–101 (RIALKSSRSWKYVKGPRGLLELFSSRRIEANPLRKLYFHGVFRQRIEMLLSAQTVV) the chain is Cytoplasmic. A helical membrane pass occupies residues 102 to 122 (GQVLVILVFVLSIGSLVIYFI). At 123–137 (NSMDPVRRCSSYEDK) the chain is on the extracellular side. The helical transmembrane segment at 138–158 (IVHVDLSFNAFFSFYFGLRFW) threads the bilayer. Topologically, residues 159 to 165 (AAEDKIK) are cytoplasmic. Residues 166 to 186 (FWLEMNSIVDIFTIPPTFISY) form a helical membrane-spanning segment. The Extracellular portion of the chain corresponds to 187–188 (YL). A helical; Voltage-sensor transmembrane segment spans residues 189–209 (KSNWLGLRFLRALRLLELPKI). Residues 210 to 226 (LQILQVIKTSNSVKLSK) lie on the Cytoplasmic side of the membrane. The chain crosses the membrane as a helical span at residues 227–247 (LLSIVISTWFTAAGFLHLVEN). Topologically, residues 248–259 (SGDPWLNGRNSQ) are extracellular. Residues 260-282 (TMSYFESIYLVTATMSTVGFGDV) constitute an intramembrane region (pore-forming). The short motif at 276–279 (TVGF) is the Selectivity for potassium element. The Extracellular portion of the chain corresponds to 283–290 (VAKTSLGR). A helical transmembrane segment spans residues 291 to 311 (IFIVFFTLGSLILFANYIPEM). The Cytoplasmic portion of the chain corresponds to 312–1121 (VELFSTRKKY…LDASDIVQEK (810 aa)). 2 RCK N-terminal domains span residues 331–473 (KKFI…DNIL) and 718–889 (QNHI…DGML). Disordered regions lie at residues 836 to 858 (SPTP…KERK) and 1052 to 1076 (DSSP…GSNF).

It belongs to the potassium channel family. Calcium-activated (TC 1.A.1.3) subfamily. KCa5.1/KCNU1 sub-subfamily. Homotetramer; which constitutes the calcium-activated potassium channel. Interact with LRRC52; this interaction changes some channel gating properties, such as shifting gating to more negative potentials at a given pH. Testis-specific. Mainly expressed in spermatocytes. In terms of tissue distribution, expressed in testis, brain, eye and kidney.

The protein localises to the cell membrane. It is found in the cytoplasm. It carries out the reaction K(+)(in) = K(+)(out). Its activity is regulated as follows. Regulated by changes in cytosolic pH; activated by alkalization. In contrast to human KCNU1 is not activated by Ca(2+) or Mg(2+). The auxiliary subunit LRRC52 shifts the activation of KCNU1 to more negative potentials at a given pH. Its function is as follows. Testis-specific potassium channel activated by both intracellular pH and membrane voltage that mediates export of K(+). Represents the primary spermatozoan K(+) current. The channel underlies a pH-triggered membrane hyperpolarization during the process of sperm capacitation, as sperm encounter the alkaline environment near the ovum in the female reproductive tract, thereby playing an essential for male fertility. In Mus musculus (Mouse), this protein is Potassium channel subfamily U member 1 (Kcnu1).